Here is a 283-residue protein sequence, read N- to C-terminus: Bifunctional protein FolD (283 aa).

NADP(+) is bound by residues 166 to 168 (GQS), Ser-191, and Ile-232.

This sequence belongs to the tetrahydrofolate dehydrogenase/cyclohydrolase family. In terms of assembly, homodimer.

The enzyme catalyses (6R)-5,10-methylene-5,6,7,8-tetrahydrofolate + NADP(+) = (6R)-5,10-methenyltetrahydrofolate + NADPH. It carries out the reaction (6R)-5,10-methenyltetrahydrofolate + H2O = (6R)-10-formyltetrahydrofolate + H(+). It functions in the pathway one-carbon metabolism; tetrahydrofolate interconversion. Functionally, catalyzes the oxidation of 5,10-methylenetetrahydrofolate to 5,10-methenyltetrahydrofolate and then the hydrolysis of 5,10-methenyltetrahydrofolate to 10-formyltetrahydrofolate. This Laribacter hongkongensis (strain HLHK9) protein is Bifunctional protein FolD.